A 198-amino-acid polypeptide reads, in one-letter code: MLRIAIKEQNSHFEHGLKIIMTRLANQWQQKIDFLPPEEIDNADIAFLALDDDWFSAGCYQIPMHTQHQLRAIICNKCDKEKLMFRPCLYMLPHIYREDDVEEITRKMILILHKRALRHSVPSGICHYCTTRHFSVTERHLLKLIASGYHLSETAALLSLSEEQTKSLRRSIMRKLHVKTEQQFLKYIRVNLHFLLSK.

An HTH luxR-type domain is found at 127–192 (HYCTTRHFSV…QFLKYIRVNL (66 aa)).

Its subcellular location is the fimbrium. This chain is Fimbriae W protein (fimW), found in Salmonella typhimurium (strain LT2 / SGSC1412 / ATCC 700720).